The following is a 693-amino-acid chain: MAREFSLEKTRNIGIMAHIDAGKTTTTERILYYTGRIHKIGETHEGASQMDWMEQEQDRGITITSAATTAAWEGHRVNIIDTPGHVDFTVEVERSLRVLDGAVTVLDAQSGVEPQTETVWRQATTYGVPRIVFVNKMDKLGANFEYSVSTLHDRLQANAAPIQLPIGAEDEFEAIIDLVEMKCFKYTNDLGTEIEEIEIPEDHLDRAEEARASLIEAVAETSDELMEKYLGDEEISVSELKEAIRQATTNVEFYPVLCGTAFKNKGVQLMLDAVIDYLPSPLDVKPIIGHRASNPEEEVIAKADDSAEFAALAFKVMTDPYVGKLTFFRVYSGTMTSGSYVKNSTKGKRERVGRLLQMHANSRQEIDTVYSGDIAAAVGLKDTGTGDTLCGEKNDIILESMEFPEPVIHLSVEPKSKADQDKMTQALVKLQEEDPTFHAHTDEETGQVIIGGMGELHLDILVDRMKKEFNVECNVGAPMVSYRETFKSSAQVQGKFSRQSGGRGQYGDVHIEFTPNETGAGFEFENAIVGGVVPREYIPSVEAGLKDAMENGVLAGYPLIDVKAKLYDGSYHDVDSSEMAFKIAASLALKEAAKKCDPVILEPMMKVTIEMPEEYMGDIMGDVTSRRGRVDGMEPRGNAQVVNAYVPLSEMLGYATSLRSHTQGRGTYTMYFDHYAEIPKSIAEDIIKKNKGE.

The tr-type G domain maps to 8–282 (EKTRNIGIMA…AVIDYLPSPL (275 aa)). GTP contacts are provided by residues 17–24 (AHIDAGKT), 81–85 (DTPGH), and 135–138 (NKMD).

The protein belongs to the TRAFAC class translation factor GTPase superfamily. Classic translation factor GTPase family. EF-G/EF-2 subfamily.

It localises to the cytoplasm. Catalyzes the GTP-dependent ribosomal translocation step during translation elongation. During this step, the ribosome changes from the pre-translocational (PRE) to the post-translocational (POST) state as the newly formed A-site-bound peptidyl-tRNA and P-site-bound deacylated tRNA move to the P and E sites, respectively. Catalyzes the coordinated movement of the two tRNA molecules, the mRNA and conformational changes in the ribosome. This is Elongation factor G from Staphylococcus aureus (strain Newman).